Consider the following 70-residue polypeptide: Conotoxin Pl171 (70 aa).

The signal sequence occupies residues 1–21 (MGMRMMFTMILLVVLVTTVVS). Intrachain disulfides connect cysteine 54/cysteine 61 and cysteine 55/cysteine 67. Phenylalanine 69 carries the post-translational modification Phenylalanine amide.

This sequence belongs to the conotoxin A superfamily. As to expression, expressed by the venom duct.

The protein localises to the secreted. Probable neurotoxin with unknown target. Possibly targets ion channels. The polypeptide is Conotoxin Pl171 (Conus planorbis (Planorbis cone)).